Consider the following 260-residue polypeptide: Lysine/arginine/ornithine-binding periplasmic protein (260 aa).

An N-terminal signal peptide occupies residues 1–22; the sequence is MKKSILALSLLVGLSTAASSYA. D33 is an L-arginine binding site. D33 serves as a coordination point for L-lysine. D33 serves as a coordination point for L-ornithine. A disulfide bridge links C60 with C67. Residues S91, S92, S94, R99, T143, and D183 each coordinate L-arginine. The L-ornithine site is built by S91, S92, S94, R99, T143, and D183. 4 residues coordinate L-lysine: S92, S94, R99, and T143.

This sequence belongs to the bacterial solute-binding protein 3 family. The complex is composed of two ATP-binding proteins (HisP), two transmembrane proteins (HisM and HisQ) and a solute-binding protein (ArgT).

The protein resides in the periplasm. Its function is as follows. Part of the ABC transporter complex HisPMQ-ArgT involved in lysine/arginine/ornithine transport. Binds lysine, arginine and ornithine. Stimulates ATPase activity of HisP. This Escherichia coli (strain K12) protein is Lysine/arginine/ornithine-binding periplasmic protein (argT).